Consider the following 566-residue polypeptide: Proline--tRNA ligase (566 aa).

Belongs to the class-II aminoacyl-tRNA synthetase family. ProS type 1 subfamily. Homodimer.

It is found in the cytoplasm. The enzyme catalyses tRNA(Pro) + L-proline + ATP = L-prolyl-tRNA(Pro) + AMP + diphosphate. In terms of biological role, catalyzes the attachment of proline to tRNA(Pro) in a two-step reaction: proline is first activated by ATP to form Pro-AMP and then transferred to the acceptor end of tRNA(Pro). As ProRS can inadvertently accommodate and process non-cognate amino acids such as alanine and cysteine, to avoid such errors it has two additional distinct editing activities against alanine. One activity is designated as 'pretransfer' editing and involves the tRNA(Pro)-independent hydrolysis of activated Ala-AMP. The other activity is designated 'posttransfer' editing and involves deacylation of mischarged Ala-tRNA(Pro). The misacylated Cys-tRNA(Pro) is not edited by ProRS. The sequence is that of Proline--tRNA ligase from Staphylococcus haemolyticus (strain JCSC1435).